Reading from the N-terminus, the 139-residue chain is Protein archease (139 aa).

Ca(2+)-binding residues include Asp12, Asp138, and Ile139.

The protein belongs to the archease family.

In terms of biological role, activates the tRNA-splicing ligase complex by facilitating the enzymatic turnover of catalytic subunit RtcB. Acts by promoting the guanylylation of RtcB, a key intermediate step in tRNA ligation. Can also alter the NTP specificity of RtcB such that ATP, dGTP or ITP is used efficiently. This is Protein archease from Saccharolobus islandicus (strain Y.N.15.51 / Yellowstone #2) (Sulfolobus islandicus).